Here is a 388-residue protein sequence, read N- to C-terminus: Putative F-box protein At3g49520 (388 aa).

One can recognise an F-box domain in the interval Met1–Ser47.

In Arabidopsis thaliana (Mouse-ear cress), this protein is Putative F-box protein At3g49520.